The sequence spans 361 residues: Phospho-N-acetylmuramoyl-pentapeptide-transferase (361 aa).

Transmembrane regions (helical) follow at residues 26–46, 71–91, 97–117, 134–154, 168–188, 200–220, 236–256, 264–284, 290–310, and 338–358; these read AGGAILTSLLICFVAGPCIIE, TPTMGGLLILLSVVASTFLWA, FILWLLTGTLWLGFLGFCDDY, IFGQTVFAAVLAAYLNFFPSN, GFFINFSFLYALFVIIVIVGS, GLAIGNITIVAFSLTLFAYFA, GAGEISIFLFAVVGSSLGFLW, IFMGDTGSLFLGGVLGMVSLF, VLVLLGGVFVIEALSVLIQIF, and KVTVRFWIAGVILAILSFASL.

It belongs to the glycosyltransferase 4 family. MraY subfamily. Requires Mg(2+) as cofactor.

It localises to the cell membrane. It carries out the reaction UDP-N-acetyl-alpha-D-muramoyl-L-alanyl-gamma-D-glutamyl-meso-2,6-diaminopimeloyl-D-alanyl-D-alanine + di-trans,octa-cis-undecaprenyl phosphate = di-trans,octa-cis-undecaprenyl diphospho-N-acetyl-alpha-D-muramoyl-L-alanyl-D-glutamyl-meso-2,6-diaminopimeloyl-D-alanyl-D-alanine + UMP. Its pathway is cell wall biogenesis; peptidoglycan biosynthesis. Catalyzes the initial step of the lipid cycle reactions in the biosynthesis of the cell wall peptidoglycan: transfers peptidoglycan precursor phospho-MurNAc-pentapeptide from UDP-MurNAc-pentapeptide onto the lipid carrier undecaprenyl phosphate, yielding undecaprenyl-pyrophosphoryl-MurNAc-pentapeptide, known as lipid I. This Endomicrobium trichonymphae protein is Phospho-N-acetylmuramoyl-pentapeptide-transferase.